The following is a 420-amino-acid chain: 3-phosphoshikimate 1-carboxyvinyltransferase (420 aa).

Lysine 26, serine 27, and arginine 31 together coordinate 3-phosphoshikimate. Lysine 26 contacts phosphoenolpyruvate. 2 residues coordinate phosphoenolpyruvate: glycine 97 and arginine 125. Serine 170, serine 171, glutamine 172, aspartate 297, asparagine 320, and lysine 324 together coordinate 3-phosphoshikimate. Glutamine 172 serves as a coordination point for phosphoenolpyruvate. Aspartate 297 functions as the Proton acceptor in the catalytic mechanism. Phosphoenolpyruvate contacts are provided by arginine 328, arginine 375, and lysine 400.

The protein belongs to the EPSP synthase family. In terms of assembly, monomer.

It is found in the cytoplasm. The catalysed reaction is 3-phosphoshikimate + phosphoenolpyruvate = 5-O-(1-carboxyvinyl)-3-phosphoshikimate + phosphate. It participates in metabolic intermediate biosynthesis; chorismate biosynthesis; chorismate from D-erythrose 4-phosphate and phosphoenolpyruvate: step 6/7. Its function is as follows. Catalyzes the transfer of the enolpyruvyl moiety of phosphoenolpyruvate (PEP) to the 5-hydroxyl of shikimate-3-phosphate (S3P) to produce enolpyruvyl shikimate-3-phosphate and inorganic phosphate. This is 3-phosphoshikimate 1-carboxyvinyltransferase from Rhizobium etli (strain ATCC 51251 / DSM 11541 / JCM 21823 / NBRC 15573 / CFN 42).